Here is a 1010-residue protein sequence, read N- to C-terminus: Pre-mRNA-splicing factor cwc22 (1010 aa).

The segment covering 1–10 (MASADMSPSR) has biased composition (polar residues). The disordered stretch occupies residues 1–166 (MASADMSPSR…RTPTPPPVAV (166 aa)). Over residues 18–28 (RSPSPRTQSPS) the composition is skewed to low complexity. 2 stretches are compositionally biased toward basic and acidic residues: residues 29–39 (PRDEDGSRSPG) and 65–78 (PRRDRSLSPRDQPH). Residues 84–109 (RSPTPRSQSPSRRSVRSPSPRQGSPA) show a composition bias toward low complexity. A compositionally biased stretch (basic and acidic residues) spans 142 to 158 (RHRDAGGDYRPVRKERT). The MIF4G domain maps to 222–405 (KKSVNGLVNK…EVLFQVRKDK (184 aa)). The interval 466–498 (GEASDDDEDDDDDDESESGSESEDEEQKALEIK) is disordered. Over residues 468 to 491 (ASDDDEDDDDDDESESGSESEDEE) the composition is skewed to acidic residues. The region spanning 507–623 (NLRRTIYLSI…GWHVFSVIHL (117 aa)) is the MI domain. Residues 708-1010 (LPAPPADSDS…SPVAKRGRVD (303 aa)) form a disordered region. Residues 718–732 (ESVSSYSSYSSYSSR) show a composition bias toward low complexity. The span at 753–775 (PPRRGRGRSYSRTPSRSRSRSRS) shows a compositional bias: basic residues. Positions 776–787 (YSRSVSKSVSRS) are enriched in low complexity. Composition is skewed to basic residues over residues 834-846 (RRGRSGTRSRSRS) and 899-910 (RLRRGSYSRSRS). Residues 911–935 (RSPIPIRGNGPAGRDTGRAGPAPAR) are compositionally biased toward low complexity. The segment covering 936–948 (GGRRNRSYSRSRT) has biased composition (basic residues). Residues 961-973 (SRRVVSRSPSPVV) show a composition bias toward low complexity. Over residues 976-1010 (NKRRRSYSSSRSRSRSSSRSRYRSRSPVAKRGRVD) the composition is skewed to basic residues.

Belongs to the CWC22 family. Associated with the spliceosome.

The protein localises to the cytoplasm. It is found in the nucleus. Involved in pre-mRNA splicing. The polypeptide is Pre-mRNA-splicing factor cwc22 (msp-1) (Neurospora crassa (strain ATCC 24698 / 74-OR23-1A / CBS 708.71 / DSM 1257 / FGSC 987)).